The sequence spans 318 residues: NADH-ubiquinone oxidoreductase chain 1 (318 aa).

The next 8 helical transmembrane spans lie at 2 to 22 (FLIN…FLTL), 69 to 89 (FLFT…WAPL), 102 to 122 (LLFI…SGWA), 146 to 166 (MTTI…TAFA), 171 to 191 (HLWL…STLA), 222 to 242 (LFFM…VILF), 253 to 273 (EIST…FLWV), and 294 to 314 (LPLT…LACI).

It belongs to the complex I subunit 1 family.

The protein resides in the mitochondrion inner membrane. The catalysed reaction is a ubiquinone + NADH + 5 H(+)(in) = a ubiquinol + NAD(+) + 4 H(+)(out). Its function is as follows. Core subunit of the mitochondrial membrane respiratory chain NADH dehydrogenase (Complex I) that is believed to belong to the minimal assembly required for catalysis. Complex I functions in the transfer of electrons from NADH to the respiratory chain. The immediate electron acceptor for the enzyme is believed to be ubiquinone. This is NADH-ubiquinone oxidoreductase chain 1 (MT-ND1) from Loxodonta africana (African elephant).